We begin with the raw amino-acid sequence, 107 residues long: MARVTVEDCLTNMDNRFQLVLVGSKRARQLANGAEAHVDWDNDKPTVVALREIADGHVGREILEEQPEPVLDFEAEASALMEEEAAKGNADAGQGEGDAPKTPGQDG.

A disordered region spans residues 81–107 (MEEEAAKGNADAGQGEGDAPKTPGQDG).

It belongs to the RNA polymerase subunit omega family. In terms of assembly, the RNAP catalytic core consists of 2 alpha, 1 beta, 1 beta' and 1 omega subunit. When a sigma factor is associated with the core the holoenzyme is formed, which can initiate transcription.

It catalyses the reaction RNA(n) + a ribonucleoside 5'-triphosphate = RNA(n+1) + diphosphate. Promotes RNA polymerase assembly. Latches the N- and C-terminal regions of the beta' subunit thereby facilitating its interaction with the beta and alpha subunits. The protein is DNA-directed RNA polymerase subunit omega of Alkalilimnicola ehrlichii (strain ATCC BAA-1101 / DSM 17681 / MLHE-1).